We begin with the raw amino-acid sequence, 186 residues long: Small ribosomal subunit protein uS5 (186 aa).

One can recognise an S5 DRBM domain in the interval 18–81 (FVDKLVHINR…EAAKRAMIRV (64 aa)).

It belongs to the universal ribosomal protein uS5 family. As to quaternary structure, part of the 30S ribosomal subunit. Contacts proteins S4 and S8.

With S4 and S12 plays an important role in translational accuracy. Its function is as follows. Located at the back of the 30S subunit body where it stabilizes the conformation of the head with respect to the body. This chain is Small ribosomal subunit protein uS5, found in Parvibaculum lavamentivorans (strain DS-1 / DSM 13023 / NCIMB 13966).